A 451-amino-acid polypeptide reads, in one-letter code: Cysteine protease ATG4 (451 aa).

Cysteine 122 functions as the Nucleophile in the catalytic mechanism. Residues aspartate 297 and histidine 299 contribute to the active site.

It belongs to the peptidase C54 family. Interacts with ATG8.

Its subcellular location is the cytoplasm. It is found in the nucleus. It localises to the preautophagosomal structure. It carries out the reaction [protein]-C-terminal L-amino acid-glycyl-phosphatidylethanolamide + H2O = [protein]-C-terminal L-amino acid-glycine + a 1,2-diacyl-sn-glycero-3-phosphoethanolamine. Cysteine protease that plays a key role in cytoplasm to vacuole transport (Cvt) and autophagy by mediating both proteolytic activation and delipidation of ATG8. Required for selective autophagic degradation of the nucleus (nucleophagy) as well as for mitophagy which contributes to regulate mitochondrial quantity and quality by eliminating the mitochondria to a basal level to fulfill cellular energy requirements and preventing excess ROS production. The protease activity is required for proteolytic activation of ATG8: cleaves the C-terminal amino acid of ATG8 to reveal a C-terminal glycine. ATG8 ubiquitin-like activity requires the exposure of the glycine at the C-terminus for its conjugation to phosphatidylethanolamine (PE) and its insertion to membranes, which is necessary for autophagy. The ATG8-PE conjugate mediates tethering between adjacent membranes and stimulates membrane hemifusion, leading to expansion of the autophagosomal membrane during autophagy. In addition to the protease activity, also catalyzes deconjugation of PE-conjugated forms of ATG8 during macroautophagy: ATG8 delipidation is required to release the protein from membranes, which facilitates multiple events during macroautophagy, and especially for efficient autophagosome biogenesis, the assembly of ATG9-containing tubulovesicular clusters into phagophores/autophagosomes, and for the disassembly of PAS-associated ATG components. ATG8 delipidation by ATG4 also recycles ATG8-PE generated on inappropriate membranes to maintain a reservoir of unlipidated ATG8 that is required for autophagosome formation at the PAS. The chain is Cysteine protease ATG4 from Kluyveromyces marxianus (strain DMKU3-1042 / BCC 29191 / NBRC 104275) (Yeast).